Here is a 343-residue protein sequence, read N- to C-terminus: Lumican (343 aa).

The signal sequence occupies residues Met1 to Cys18. Gln19 bears the Pyrrolidone carboxylic acid mark. Sulfotyrosine occurs at positions 20 and 22. In terms of domain architecture, LRRNT spans Asp31–Ser69. LRR repeat units lie at residues Gly70–Asn91, Asp94–Lys117, Asn120–Lys140, Thr141–Gly162, Asn165–Lys186, Ser190–Ser211, Leu212–Gly232, and Thr235–Val255. Asn91 carries N-linked (GlcNAc...) (keratan sulfate) asparagine glycosylation. An N-linked (GlcNAc...) (keratan sulfate) asparagine glycan is attached at Asn130. Residue Asn165 is glycosylated (N-linked (GlcNAc...) (keratan sulfate) asparagine). Asn257 carries an N-linked (GlcNAc...) (keratan sulfate) asparagine glycan. LRR repeat units lie at residues Ser260 to Leu281, Glu282 to Lys301, and Lys310 to Met330. A disulfide bond links Cys300 and Cys333. N-linked (GlcNAc...) asparagine glycosylation is present at Asn320.

The protein belongs to the small leucine-rich proteoglycan (SLRP) family. SLRP class II subfamily. In terms of assembly, binds to laminin. Contains keratan sulfate.

Its subcellular location is the secreted. It localises to the extracellular space. It is found in the extracellular matrix. This Coturnix japonica (Japanese quail) protein is Lumican (LUM).